The sequence spans 314 residues: Probable cell division protein WhiA (314 aa).

Residues S274–N308 constitute a DNA-binding region (H-T-H motif).

This sequence belongs to the WhiA family.

Functionally, involved in cell division and chromosome segregation. In Staphylococcus epidermidis (strain ATCC 35984 / DSM 28319 / BCRC 17069 / CCUG 31568 / BM 3577 / RP62A), this protein is Probable cell division protein WhiA.